Consider the following 359-residue polypeptide: tRNA/tmRNA (uracil-C(5))-methyltransferase (359 aa).

Positions 183, 211, 216, 232, and 292 each coordinate S-adenosyl-L-methionine. Cysteine 317 serves as the catalytic Nucleophile. The Proton acceptor role is filled by glutamate 351.

It belongs to the class I-like SAM-binding methyltransferase superfamily. RNA M5U methyltransferase family. TrmA subfamily.

The enzyme catalyses uridine(54) in tRNA + S-adenosyl-L-methionine = 5-methyluridine(54) in tRNA + S-adenosyl-L-homocysteine + H(+). It carries out the reaction uridine(341) in tmRNA + S-adenosyl-L-methionine = 5-methyluridine(341) in tmRNA + S-adenosyl-L-homocysteine + H(+). Its function is as follows. Dual-specificity methyltransferase that catalyzes the formation of 5-methyluridine at position 54 (m5U54) in all tRNAs, and that of position 341 (m5U341) in tmRNA (transfer-mRNA). This is tRNA/tmRNA (uracil-C(5))-methyltransferase from Pseudomonas fluorescens (strain ATCC BAA-477 / NRRL B-23932 / Pf-5).